The chain runs to 263 residues: Small ribosomal subunit protein uS3 (263 aa).

The KH type-2 domain occupies 39 to 107 (VREYLKKKLK…PVHVNIEEIR (69 aa)). The tract at residues 211-263 (GELPPEAATPREEERRPRRAPRGDRPDGARTGRPGGRGRGPRKADAAPAPEGE) is disordered. Residues 219–240 (TPREEERRPRRAPRGDRPDGAR) show a composition bias toward basic and acidic residues.

It belongs to the universal ribosomal protein uS3 family. In terms of assembly, part of the 30S ribosomal subunit. Forms a tight complex with proteins S10 and S14.

Functionally, binds the lower part of the 30S subunit head. Binds mRNA in the 70S ribosome, positioning it for translation. In Bordetella pertussis (strain Tohama I / ATCC BAA-589 / NCTC 13251), this protein is Small ribosomal subunit protein uS3.